Reading from the N-terminus, the 122-residue chain is uncharacterized protein (122 aa).

This is an uncharacterized protein from Carica papaya (Papaya).